The chain runs to 545 residues: ATP synthase subunit alpha (545 aa).

173–180 (GDRQTGKT) lines the ATP pocket.

The protein belongs to the ATPase alpha/beta chains family. F-type ATPases have 2 components, CF(1) - the catalytic core - and CF(0) - the membrane proton channel. CF(1) has five subunits: alpha(3), beta(3), gamma(1), delta(1), epsilon(1). CF(0) has three main subunits: a(1), b(2) and c(9-12). The alpha and beta chains form an alternating ring which encloses part of the gamma chain. CF(1) is attached to CF(0) by a central stalk formed by the gamma and epsilon chains, while a peripheral stalk is formed by the delta and b chains.

The protein resides in the cell membrane. It catalyses the reaction ATP + H2O + 4 H(+)(in) = ADP + phosphate + 5 H(+)(out). Functionally, produces ATP from ADP in the presence of a proton gradient across the membrane. The alpha chain is a regulatory subunit. The chain is ATP synthase subunit alpha from Clavibacter michiganensis subsp. michiganensis (strain NCPPB 382).